Here is a 322-residue protein sequence, read N- to C-terminus: Tetraacyldisaccharide 4'-kinase (322 aa).

Position 54 to 61 (54 to 61 (SVGGTGKT)) interacts with ATP.

The protein belongs to the LpxK family.

It carries out the reaction a lipid A disaccharide + ATP = a lipid IVA + ADP + H(+). The protein operates within glycolipid biosynthesis; lipid IV(A) biosynthesis; lipid IV(A) from (3R)-3-hydroxytetradecanoyl-[acyl-carrier-protein] and UDP-N-acetyl-alpha-D-glucosamine: step 6/6. In terms of biological role, transfers the gamma-phosphate of ATP to the 4'-position of a tetraacyldisaccharide 1-phosphate intermediate (termed DS-1-P) to form tetraacyldisaccharide 1,4'-bis-phosphate (lipid IVA). The sequence is that of Tetraacyldisaccharide 4'-kinase from Francisella tularensis subsp. tularensis (strain FSC 198).